The primary structure comprises 387 residues: MQNFTYWNPTKLIFGRGEVERLPEELKPYGKNVLLVYGGGSIKRSGLYDQVIEQLNKAGATVHELAGVEPNPRVSTVNKGVAICKEQNIDFLLAVGGGSVIDCTKAIAAGAKYDGDAWDIVTKKHQPKDALPFGTVLTLAATGSEMNSGSVITNWETKEKYGWGSPLVFPKFSILDPVNTFTVPKNHTIYGMVDMMSHVFEQYFHHVSNTPYQDRMCESLLRTVIETAPKLINDLENYELRETILYTGTIALNGMLSMGARGDWATHNIEHAVSAVYDIPHAGGLAILFPNWMRHTLSENPARMKQLAVRVFDVEEAGKTDEEIALEGIDKLSAFWTSLGAPNRLADYDINDEQLDTIADKAMANGTFGQFKSLNKEDVLSILKASL.

Belongs to the iron-containing alcohol dehydrogenase family.

The protein operates within alcohol metabolism; butanol biosynthesis. This chain is Probable NADH-dependent butanol dehydrogenase 1 (yugJ), found in Bacillus subtilis (strain 168).